An 85-amino-acid polypeptide reads, in one-letter code: Large ribosomal subunit protein bL27 (85 aa).

The disordered stretch occupies residues 1 to 27 (MAHKKAGGSTKNGRDSQSKRLGVKRYG).

This sequence belongs to the bacterial ribosomal protein bL27 family.

The polypeptide is Large ribosomal subunit protein bL27 (Halorhodospira halophila (strain DSM 244 / SL1) (Ectothiorhodospira halophila (strain DSM 244 / SL1))).